A 268-amino-acid polypeptide reads, in one-letter code: 5'-nucleotidase SurE (268 aa).

Residues Asp8, Asp9, Ser40, and Asn98 each contribute to the a divalent metal cation site.

This sequence belongs to the SurE nucleotidase family. Requires a divalent metal cation as cofactor.

Its subcellular location is the cytoplasm. The enzyme catalyses a ribonucleoside 5'-phosphate + H2O = a ribonucleoside + phosphate. Its function is as follows. Nucleotidase that shows phosphatase activity on nucleoside 5'-monophosphates. The polypeptide is 5'-nucleotidase SurE (Trichodesmium erythraeum (strain IMS101)).